A 164-amino-acid polypeptide reads, in one-letter code: Large ribosomal subunit protein uL11 (164 aa).

The protein belongs to the universal ribosomal protein uL11 family. Part of the ribosomal stalk of the 50S ribosomal subunit. Interacts with L10 and the large rRNA to form the base of the stalk. L10 forms an elongated spine to which L12 dimers bind in a sequential fashion forming a multimeric L10(L12)X complex.

In terms of biological role, forms part of the ribosomal stalk which helps the ribosome interact with GTP-bound translation factors. This chain is Large ribosomal subunit protein uL11, found in Pyrococcus furiosus (strain ATCC 43587 / DSM 3638 / JCM 8422 / Vc1).